The chain runs to 55 residues: Large ribosomal subunit protein bL33 (55 aa).

The protein belongs to the bacterial ribosomal protein bL33 family.

This Klebsiella pneumoniae (strain 342) protein is Large ribosomal subunit protein bL33.